A 499-amino-acid chain; its full sequence is Sensor histidine kinase PdtaS (499 aa).

A GAF region spans residues 4–149 (LGDLLAEHTM…PLEGAYLDCA (146 aa)). Residues 178–289 (DGFIRLNEGG…TEVKRRDRAL (112 aa)) form a PAS-like region. The region spanning 298–493 (EIHHRVKNNL…DVVLRVPIGR (196 aa)) is the Histidine kinase domain. Residue histidine 301 is modified to Phosphohistidine; by autocatalysis.

Autophosphorylated.

It is found in the cytoplasm. It catalyses the reaction ATP + protein L-histidine = ADP + protein N-phospho-L-histidine.. In terms of biological role, member of the two-component regulatory system PdtaR/PdtaS. This two-component system plays an essential role in mycobacterial adaptation to poor nutrient conditions. Nutrient deprivation results in increasing intracellular concentrations of cyclic diguanosine monophosphate (c-di-GMP), which binds to the PdtaS sensor and promotes its autophosphorylation, leading to the activation of the signaling cascade. The phosphate group is then transferred to PdtaR. The protein is Sensor histidine kinase PdtaS of Mycolicibacterium smegmatis (strain ATCC 700084 / mc(2)155) (Mycobacterium smegmatis).